The primary structure comprises 129 residues: Small ribosomal subunit protein uS11 (129 aa).

This sequence belongs to the universal ribosomal protein uS11 family. In terms of assembly, part of the 30S ribosomal subunit.

Its function is as follows. Located on the platform of the 30S subunit. The polypeptide is Small ribosomal subunit protein uS11 (Haloarcula marismortui (strain ATCC 43049 / DSM 3752 / JCM 8966 / VKM B-1809) (Halobacterium marismortui)).